Reading from the N-terminus, the 262-residue chain is Acyl-[acyl-carrier-protein]--UDP-N-acetylglucosamine O-acyltransferase (262 aa).

Belongs to the transferase hexapeptide repeat family. LpxA subfamily. In terms of assembly, homotrimer.

The protein localises to the cytoplasm. It carries out the reaction a (3R)-hydroxyacyl-[ACP] + UDP-N-acetyl-alpha-D-glucosamine = a UDP-3-O-[(3R)-3-hydroxyacyl]-N-acetyl-alpha-D-glucosamine + holo-[ACP]. It functions in the pathway glycolipid biosynthesis; lipid IV(A) biosynthesis; lipid IV(A) from (3R)-3-hydroxytetradecanoyl-[acyl-carrier-protein] and UDP-N-acetyl-alpha-D-glucosamine: step 1/6. Its function is as follows. Involved in the biosynthesis of lipid A, a phosphorylated glycolipid that anchors the lipopolysaccharide to the outer membrane of the cell. This is Acyl-[acyl-carrier-protein]--UDP-N-acetylglucosamine O-acyltransferase from Salmonella schwarzengrund (strain CVM19633).